A 333-amino-acid chain; its full sequence is Phosphate acyltransferase (333 aa).

This sequence belongs to the PlsX family. As to quaternary structure, homodimer. Probably interacts with PlsY.

Its subcellular location is the cytoplasm. The catalysed reaction is a fatty acyl-[ACP] + phosphate = an acyl phosphate + holo-[ACP]. It participates in lipid metabolism; phospholipid metabolism. In terms of biological role, catalyzes the reversible formation of acyl-phosphate (acyl-PO(4)) from acyl-[acyl-carrier-protein] (acyl-ACP). This enzyme utilizes acyl-ACP as fatty acyl donor, but not acyl-CoA. This chain is Phosphate acyltransferase, found in Cellvibrio japonicus (strain Ueda107) (Pseudomonas fluorescens subsp. cellulosa).